Consider the following 698-residue polypeptide: Ion-translocating oxidoreductase complex subunit C (698 aa).

4Fe-4S ferredoxin-type domains follow at residues threonine 366–tyrosine 397 and lysine 407–tyrosine 436. Positions 377, 380, 383, 387, 416, 419, 422, and 426 each coordinate [4Fe-4S] cluster.

Belongs to the 4Fe4S bacterial-type ferredoxin family. RnfC subfamily. In terms of assembly, the complex is composed of six subunits: RnfA, RnfB, RnfC, RnfD, RnfE and RnfG. It depends on [4Fe-4S] cluster as a cofactor.

Its subcellular location is the cell inner membrane. Functionally, part of a membrane-bound complex that couples electron transfer with translocation of ions across the membrane. This is Ion-translocating oxidoreductase complex subunit C from Yersinia pseudotuberculosis serotype O:1b (strain IP 31758).